The following is a 341-amino-acid chain: LIM and senescent cell antigen-like-containing domain protein 2 (341 aa).

5 LIM zinc-binding domains span residues 13-74 (AVCQ…LFAP), 76-133 (CGSC…EKAK), 138-195 (YICQ…KMGV), 196-255 (PICG…LFGD), and 256-315 (VCYN…FPLE). F22 carries the post-translational modification Phosphoserine. T327 carries the phosphothreonine modification. A Phosphoserine modification is found at S328.

In terms of assembly, interacts with TGFB1I1. Interacts with integrin-linked protein kinase 1 (ILK) via the first LIM domain, and in competition with LIMS1. Part of the heterotrimeric IPP complex composed of integrin-linked kinase (ILK), LIMS1 or LIMS2, and PARVA.

It localises to the nucleus. The protein resides in the cell junction. The protein localises to the focal adhesion. It is found in the cell membrane. Functionally, adapter protein in a cytoplasmic complex linking beta-integrins to the actin cytoskeleton, bridges the complex to cell surface receptor tyrosine kinases and growth factor receptors. Plays a role in modulating cell spreading and migration. The protein is LIM and senescent cell antigen-like-containing domain protein 2 (LIMS2) of Homo sapiens (Human).